The following is a 216-amino-acid chain: Guanylate kinase (216 aa).

The 179-residue stretch at 15–193 folds into the Guanylate kinase-like domain; that stretch reads GNLFMVVAPS…ALKQLQNVVH (179 aa). 22-29 lines the ATP pocket; that stretch reads APSGAGKS.

It belongs to the guanylate kinase family.

Its subcellular location is the cytoplasm. It carries out the reaction GMP + ATP = GDP + ADP. Its function is as follows. Essential for recycling GMP and indirectly, cGMP. This chain is Guanylate kinase, found in Cupriavidus metallidurans (strain ATCC 43123 / DSM 2839 / NBRC 102507 / CH34) (Ralstonia metallidurans).